We begin with the raw amino-acid sequence, 418 residues long: Elongation factor 1-gamma 1 (418 aa).

The GST N-terminal domain occupies 1–82 (MALVLHTFDG…YVTRSKSDNP (82 aa)). The region spanning 87-213 (SLIEYAHIEQ…GDVKQADSVP (127 aa)) is the GST C-terminal domain. The interval 211 to 265 (SVPQVQKKAAAPKEQKPKEAKKEAPKEAPKPKAAEKPEEEEEAPKPKPKNPLDLL) is disordered. Positions 221 to 246 (APKEQKPKEAKKEAPKEAPKPKAAEK) are enriched in basic and acidic residues. An EF-1-gamma C-terminal domain is found at 258 to 418 (PKNPLDLLPP…EALLDAKCFK (161 aa)).

As to quaternary structure, EF-1 is composed of four subunits: alpha, beta, delta, and gamma.

Functionally, probably plays a role in anchoring the complex to other cellular components. The polypeptide is Elongation factor 1-gamma 1 (Oryza sativa subsp. japonica (Rice)).